Here is a 90-residue protein sequence, read N- to C-terminus: Accessory gland-specific peptide 26Ab (90 aa).

A signal peptide spans 1-21 (MNYFAVLCIFSCICLWQFSDA).

As to expression, main cells of the accessory glands of males.

The protein resides in the secreted. It is found in the extracellular space. This protein is transferred from male to female during mating and may affect egglaying and behavior after mating. This Drosophila mauritiana (Fruit fly) protein is Accessory gland-specific peptide 26Ab (Acp26Ab).